Reading from the N-terminus, the 207-residue chain is Proteasome subunit beta 2 (207 aa).

The propeptide at 1–10 is removed in mature form; by autocatalysis; it reads MLQLTEKFKG. The active-site Nucleophile is threonine 11.

The protein belongs to the peptidase T1B family. The 20S proteasome core is composed of 14 alpha and 14 beta subunits that assemble into four stacked heptameric rings, resulting in a barrel-shaped structure. The two inner rings, each composed of seven catalytic beta subunits, are sandwiched by two outer rings, each composed of seven alpha subunits. The catalytic chamber with the active sites is on the inside of the barrel. Has a gated structure, the ends of the cylinder being occluded by the N-termini of the alpha-subunits. Is capped at one or both ends by the proteasome regulatory ATPase, PAN.

Its subcellular location is the cytoplasm. The catalysed reaction is Cleavage of peptide bonds with very broad specificity.. Its activity is regulated as follows. The formation of the proteasomal ATPase PAN-20S proteasome complex, via the docking of the C-termini of PAN into the intersubunit pockets in the alpha-rings, triggers opening of the gate for substrate entry. Interconversion between the open-gate and close-gate conformations leads to a dynamic regulation of the 20S proteasome proteolysis activity. Its function is as follows. Component of the proteasome core, a large protease complex with broad specificity involved in protein degradation. The sequence is that of Proteasome subunit beta 2 from Pyrococcus abyssi (strain GE5 / Orsay).